We begin with the raw amino-acid sequence, 270 residues long: Formamidopyrimidine-DNA glycosylase (270 aa).

Pro2 (schiff-base intermediate with DNA) is an active-site residue. The active-site Proton donor is Glu3. The active-site Proton donor; for beta-elimination activity is the Lys58. Residues His91, Arg110, and Arg151 each coordinate DNA. Residues Phe236–Arg270 form an FPG-type zinc finger. Arg260 functions as the Proton donor; for delta-elimination activity in the catalytic mechanism.

Belongs to the FPG family. In terms of assembly, monomer. The cofactor is Zn(2+).

It catalyses the reaction Hydrolysis of DNA containing ring-opened 7-methylguanine residues, releasing 2,6-diamino-4-hydroxy-5-(N-methyl)formamidopyrimidine.. The enzyme catalyses 2'-deoxyribonucleotide-(2'-deoxyribose 5'-phosphate)-2'-deoxyribonucleotide-DNA = a 3'-end 2'-deoxyribonucleotide-(2,3-dehydro-2,3-deoxyribose 5'-phosphate)-DNA + a 5'-end 5'-phospho-2'-deoxyribonucleoside-DNA + H(+). Functionally, involved in base excision repair of DNA damaged by oxidation or by mutagenic agents. Acts as a DNA glycosylase that recognizes and removes damaged bases. Has a preference for oxidized purines, such as 7,8-dihydro-8-oxoguanine (8-oxoG). Has AP (apurinic/apyrimidinic) lyase activity and introduces nicks in the DNA strand. Cleaves the DNA backbone by beta-delta elimination to generate a single-strand break at the site of the removed base with both 3'- and 5'-phosphates. This Pseudomonas aeruginosa (strain LESB58) protein is Formamidopyrimidine-DNA glycosylase.